The chain runs to 313 residues: Ribonuclease Z (313 aa).

Zn(2+) is bound by residues histidine 63, histidine 65, aspartate 67, histidine 68, histidine 142, aspartate 212, and histidine 270. Catalysis depends on aspartate 67, which acts as the Proton acceptor.

This sequence belongs to the RNase Z family. In terms of assembly, homodimer. Requires Zn(2+) as cofactor.

It catalyses the reaction Endonucleolytic cleavage of RNA, removing extra 3' nucleotides from tRNA precursor, generating 3' termini of tRNAs. A 3'-hydroxy group is left at the tRNA terminus and a 5'-phosphoryl group is left at the trailer molecule.. Its function is as follows. Zinc phosphodiesterase, which displays some tRNA 3'-processing endonuclease activity. Probably involved in tRNA maturation, by removing a 3'-trailer from precursor tRNA. The polypeptide is Ribonuclease Z (Enterococcus faecalis (strain ATCC 700802 / V583)).